Consider the following 56-residue polypeptide: MKFFNREKEINKILSIIEGEPNLIYFIYGSLNSGKFNLTEETQFIYSIVVTDGLFS.

It belongs to the archaeal ATPase family.

This is an uncharacterized protein from Methanocaldococcus jannaschii (strain ATCC 43067 / DSM 2661 / JAL-1 / JCM 10045 / NBRC 100440) (Methanococcus jannaschii).